A 196-amino-acid chain; its full sequence is Chromophore lyase CpcT/CpeT (196 aa).

It belongs to the CpcT/CpeT biliprotein lyase family.

Covalently attaches a chromophore to Cys residue(s) of phycobiliproteins. The sequence is that of Chromophore lyase CpcT/CpeT from Thermosynechococcus vestitus (strain NIES-2133 / IAM M-273 / BP-1).